The following is an 83-amino-acid chain: Large ribosomal subunit protein eL14 (83 aa).

It belongs to the eukaryotic ribosomal protein eL14 family.

The protein is Large ribosomal subunit protein eL14 of Thermococcus gammatolerans (strain DSM 15229 / JCM 11827 / EJ3).